Consider the following 351-residue polypeptide: N-acetyl-gamma-glutamyl-phosphate reductase (351 aa).

C154 is an active-site residue.

It belongs to the NAGSA dehydrogenase family. Type 1 subfamily.

It localises to the cytoplasm. The enzyme catalyses N-acetyl-L-glutamate 5-semialdehyde + phosphate + NADP(+) = N-acetyl-L-glutamyl 5-phosphate + NADPH + H(+). It functions in the pathway amino-acid biosynthesis; L-arginine biosynthesis; N(2)-acetyl-L-ornithine from L-glutamate: step 3/4. Functionally, catalyzes the NADPH-dependent reduction of N-acetyl-5-glutamyl phosphate to yield N-acetyl-L-glutamate 5-semialdehyde. The sequence is that of N-acetyl-gamma-glutamyl-phosphate reductase from Prochlorococcus marinus (strain MIT 9215).